The primary structure comprises 426 residues: Glutamate-1-semialdehyde 2,1-aminomutase (426 aa).

K265 is subject to N6-(pyridoxal phosphate)lysine.

Belongs to the class-III pyridoxal-phosphate-dependent aminotransferase family. HemL subfamily. As to quaternary structure, homodimer. Requires pyridoxal 5'-phosphate as cofactor.

Its subcellular location is the cytoplasm. The catalysed reaction is (S)-4-amino-5-oxopentanoate = 5-aminolevulinate. It functions in the pathway porphyrin-containing compound metabolism; protoporphyrin-IX biosynthesis; 5-aminolevulinate from L-glutamyl-tRNA(Glu): step 2/2. The protein is Glutamate-1-semialdehyde 2,1-aminomutase of Pseudoalteromonas translucida (strain TAC 125).